The primary structure comprises 898 residues: Eukaryotic translation initiation factor 3 subunit C (898 aa).

The span at 1–10 (MSRFFHAKED) shows a compositional bias: basic and acidic residues. 2 disordered regions span residues 1–38 (MSRFFHAKEDSDSDTSSSEDEVEDQKVNKSAKFRDDLD) and 162–238 (VTDY…SVTK). Positions 11 to 23 (SDSDTSSSEDEVE) are enriched in acidic residues. Over residues 24–37 (DQKVNKSAKFRDDL) the composition is skewed to basic and acidic residues. The span at 170–187 (DEDGYETPEDEDDDDFGE) shows a compositional bias: acidic residues. Positions 189–202 (SESKAEKSPGKPSE) are enriched in basic and acidic residues. Positions 209-218 (SDSDSDDDDS) are enriched in acidic residues. Residues 219-228 (SNWSSEPESN) show a composition bias toward low complexity. A PCI domain is found at 630-806 (YHMHINVELM…DCLIMHRVEP (177 aa)). The segment at 829–898 (QILEPRTGRG…RRHPQKPRAF (70 aa)) is disordered. 2 stretches are compositionally biased toward basic and acidic residues: residues 850-859 (RNERQGDKQK) and 866-878 (GERRGGQGQDGKR). The span at 888-898 (QRRHPQKPRAF) shows a compositional bias: basic residues.

It belongs to the eIF-3 subunit C family. Component of the eukaryotic translation initiation factor 3 (eIF-3) complex.

The protein localises to the cytoplasm. Its function is as follows. Component of the eukaryotic translation initiation factor 3 (eIF-3) complex, which is involved in protein synthesis of a specialized repertoire of mRNAs and, together with other initiation factors, stimulates binding of mRNA and methionyl-tRNAi to the 40S ribosome. The eIF-3 complex specifically targets and initiates translation of a subset of mRNAs involved in cell proliferation. The protein is Eukaryotic translation initiation factor 3 subunit C of Caenorhabditis elegans.